The chain runs to 102 residues: Large ribosomal subunit protein bL21 (102 aa).

This sequence belongs to the bacterial ribosomal protein bL21 family. In terms of assembly, part of the 50S ribosomal subunit. Contacts protein L20.

Functionally, this protein binds to 23S rRNA in the presence of protein L20. This is Large ribosomal subunit protein bL21 from Lachnospira eligens (strain ATCC 27750 / DSM 3376 / VPI C15-48 / C15-B4) (Eubacterium eligens).